The sequence spans 884 residues: E3 SUMO-protein ligase SIZ1 (884 aa).

One can recognise an SAP domain in the interval 11 to 45; the sequence is LSYFRIKELKDVLTQLGLSKQGKKQELVDRILTLL. The disordered stretch occupies residues 84-103; sequence LASKGQVSSDTSNLKVKGEP. Over residues 88–97 the composition is skewed to polar residues; that stretch reads GQVSSDTSNL. A Glycyl lysine isopeptide (Lys-Gly) (interchain with G-Cter in SUMO) cross-link involves residue lysine 100. The segment at 112–168 adopts a PHD-type zinc-finger fold; that stretch reads KVRCVCGNSLETDSMIQCEDPRCHVWQHVGCVILPDKPMDGNPPLPESFYCEICRLT. The segment at 346 to 429 adopts an SP-RING-type zinc-finger fold; that stretch reads SDSDIEVVAD…FNRITSKMKH (84 aa). Cysteine 379, histidine 381, cysteine 402, and cysteine 405 together coordinate Zn(2+). Lysine 488 participates in a covalent cross-link: Glycyl lysine isopeptide (Lys-Gly) (interchain with G-Cter in SUMO). 3 disordered regions span residues 753–778, 792–824, and 836–869; these read PSLQ…ADMS, GDSA…MDTT, and DSRQ…QTRH. Polar residues-rich tracts occupy residues 766 to 778 and 803 to 824; these read SAQS…ADMS and ATTN…MDTT. The segment covering 837 to 847 has biased composition (basic and acidic residues); the sequence is SRQDKAKKQRS.

The protein belongs to the PIAS family. In terms of assembly, interacts (via PHD domain) with SCE1, GTE3 and GTE5. Post-translationally, autosumoylated at Lys-100 and Lys-488. In terms of tissue distribution, ubiquitous.

The protein localises to the nucleus speckle. The protein operates within protein modification; protein sumoylation. Its function is as follows. E3 SUMO protein ligase involved in regulation processes. Mediates SUMO/ attachment to PHR1, a MYB transcriptional activator controlling the phosphate deficiency responses. Functions as an upstream negative regulator of salicylic acid (SA) accumulation and subsequent SA-mediated systemic acquired resistance (SAR) signaling. Probably not involved in jasmonic acid (JA)-mediated defense response. Participates in abiotic stress-induced sumoylation. Controls heat shock-induced SUMO1 and SUMO2 conjugation and facilitates basal thermotolerance. Involved in freezing tolerance by mediating sumoylation of ICE1, a transcription activator of the cold signaling regulator CBF3/DREB1A. Acts as a positive regulator of drought stress tolerance. Acts as a floral repressor that promotes FLC expression by repressing FLD activity through sumoylation. Acts as a negative regulator of abscisic acid (ABA) signaling through ABI5 sumoylation. Mediates sumoylation of SCE1, GTE3 and GTE5. Functions as a negative regulator of SnRK1 signaling through sumoylation of several components of the SnRK1 complex. In Arabidopsis thaliana (Mouse-ear cress), this protein is E3 SUMO-protein ligase SIZ1.